The primary structure comprises 398 residues: Minor capsid protein (398 aa).

Positions 359 to 398 (EEASVTSTEETLTPAQEAARTRAANKARKEAELAAATAEQ) are disordered. The segment covering 362–372 (SVTSTEETLTP) has biased composition (polar residues). Residues 373–382 (AQEAARTRAA) show a composition bias toward low complexity.

The protein belongs to the T7virus minor capsid protein family. Interacts with the connector protein and the major capsid protein.

It is found in the virion. Its function is as follows. Assembles with the major capsid protein to form an icosahedral capsid with a T=7 symmetry, about 60 nm in diameter, and consisting of 415 capsid proteins. The major and minor capsid proteins are incorporated into the capsid in about a 90/10 ratio respectively. Once the capsid formed, encapsidates one single copy of the viral genome. This Escherichia coli (Bacteriophage T7) protein is Minor capsid protein.